Here is a 514-residue protein sequence, read N- to C-terminus: Beta-secretase 2 (514 aa).

The N-terminal stretch at 1-20 is a signal peptide; the sequence is MGALLRALLLPLLAQWLLRA. A propeptide spanning residues 21–62 is cleaved from the precursor; that stretch reads VPVLAPAPFTLPLQVAGAANHRASTVPGLGTPELPRADGLAL. At 21–469 the chain is on the extracellular side; that stretch reads VPVLAPAPFT…NEPILWIVSY (449 aa). The Peptidase A1 domain maps to 88–425; the sequence is YYLEMLIGTP…DRAQRRVGFA (338 aa). D106 is a catalytic residue. N166 is a glycosylation site (N-linked (GlcNAc...) asparagine). 3 cysteine pairs are disulfide-bonded: C229/C429, C288/C453, and C340/C389. D299 is a catalytic residue. N-linked (GlcNAc...) asparagine glycosylation is present at N362. Residues 470-490 traverse the membrane as a helical segment; that stretch reads ALMSVCGAILLVLILLLLFPL. Over 491–514 the chain is Cytoplasmic; it reads HCRHAPRDPEVVNDESSLVRHRWK.

This sequence belongs to the peptidase A1 family. As to quaternary structure, monomer. Interacts with RTN3 and RTN4. Undergoes autoproteolytic cleavage. Post-translationally, glycosylated.

Its subcellular location is the cell membrane. It localises to the golgi apparatus. It is found in the endoplasmic reticulum. The protein localises to the endosome. The protein resides in the melanosome. The enzyme catalyses Broad endopeptidase specificity. Cleaves Glu-Val-Asn-Leu-|-Asp-Ala-Glu-Phe in the Swedish variant of Alzheimer's amyloid precursor protein.. In terms of biological role, responsible for the proteolytic processing of the amyloid precursor protein (APP). Cleaves APP, between residues 690 and 691, leading to the generation and extracellular release of beta-cleaved soluble APP, and a corresponding cell-associated C-terminal fragment which is later released by gamma-secretase. It has also been shown that it can cleave APP between residues 671 and 672. Involved in the proteolytic shedding of PMEL at early stages of melanosome biogenesis. Cleaves PMEL within the M-beta fragment to release the amyloidogenic PMEL luminal fragment containing M-alpha and a small portion of M-beta N-terminus. This is a prerequisite step for subsequent processing and assembly of PMEL fibrils into amyloid sheets. Responsible also for the proteolytic processing of CLTRN in pancreatic beta cells. The protein is Beta-secretase 2 (Bace2) of Rattus norvegicus (Rat).